The sequence spans 219 residues: MTQDELKKAVGWAALQYVQPGTIVGVGTGSTAAHFIDALGTMKGQIEGAVSSSDASTEKLKSLGITVFDLNEVDRLGIYVDGADEINGHMQMIKGGGAALTREKIIASVADKFICIADASKQVDILGNFPLPVEVIPMARSAVARQLVKLGGRPEYRQGVVTDNGNVILDVHGLEILDAIALENAINAIPGVVTVGLFANRGADVALIGTADGVKTIVK.

Residues 28–31 (TGST), 81–84 (DGAD), and 94–97 (KGGG) contribute to the substrate site. The active-site Proton acceptor is the Glu-103. Lys-121 lines the substrate pocket.

Belongs to the ribose 5-phosphate isomerase family. As to quaternary structure, homodimer.

The enzyme catalyses aldehydo-D-ribose 5-phosphate = D-ribulose 5-phosphate. It functions in the pathway carbohydrate degradation; pentose phosphate pathway; D-ribose 5-phosphate from D-ribulose 5-phosphate (non-oxidative stage): step 1/1. Functionally, catalyzes the reversible conversion of ribose-5-phosphate to ribulose 5-phosphate. The chain is Ribose-5-phosphate isomerase A from Enterobacter cloacae.